The primary structure comprises 359 residues: Fructose-bisphosphate aldolase (359 aa).

Position 62 (S62) interacts with D-glyceraldehyde 3-phosphate. The Proton donor role is filled by D109. 4 residues coordinate Zn(2+): H110, D144, E174, and H226. Residue G227 participates in dihydroxyacetone phosphate binding. H265 is a binding site for Zn(2+). Dihydroxyacetone phosphate contacts are provided by residues G266–S268 and N287–T290.

Belongs to the class II fructose-bisphosphate aldolase family. As to quaternary structure, homodimer. Zn(2+) is required as a cofactor.

The protein resides in the cytoplasm. It carries out the reaction beta-D-fructose 1,6-bisphosphate = D-glyceraldehyde 3-phosphate + dihydroxyacetone phosphate. The protein operates within carbohydrate degradation; glycolysis; D-glyceraldehyde 3-phosphate and glycerone phosphate from D-glucose: step 4/4. Functionally, catalyzes the aldol condensation of dihydroxyacetone phosphate (DHAP or glycerone-phosphate) with glyceraldehyde 3-phosphate (G3P) to form fructose 1,6-bisphosphate (FBP) in gluconeogenesis and the reverse reaction in glycolysis. The sequence is that of Fructose-bisphosphate aldolase (FBA1) from Candida albicans (strain SC5314 / ATCC MYA-2876) (Yeast).